A 279-amino-acid polypeptide reads, in one-letter code: HTH-type transcriptional activator RhaS (279 aa).

The region spanning 175-273 (QALLGWLQNN…SQAPKSLRHQ (99 aa)) is the HTH araC/xylS-type domain. 2 consecutive DNA-binding regions (H-T-H motif) follow at residues 192 to 213 (GGLADQFSLPLRTLHRQLKQHT) and 240 to 263 (ITTIAHACGFSDSNHFSTQFRKAF).

In terms of assembly, binds DNA as a dimer.

Its subcellular location is the cytoplasm. Activates expression of the rhaBAD and rhaT operons. This is HTH-type transcriptional activator RhaS from Pectobacterium atrosepticum (strain SCRI 1043 / ATCC BAA-672) (Erwinia carotovora subsp. atroseptica).